A 328-amino-acid polypeptide reads, in one-letter code: DNA-directed RNA polymerase subunit alpha 1 (328 aa).

An alpha N-terminal domain (alpha-NTD) region spans residues 1–234 (MQGFVKDFLK…GQLDEFVDER (234 aa)). Residues 248-328 (FDPILLRPVN…NWPPASLIED (81 aa)) form an alpha C-terminal domain (alpha-CTD) region.

It belongs to the RNA polymerase alpha chain family. Homodimer. The RNAP catalytic core consists of 2 alpha, 1 beta, 1 beta' and 1 omega subunit. When a sigma factor is associated with the core the holoenzyme is formed, which can initiate transcription.

The catalysed reaction is RNA(n) + a ribonucleoside 5'-triphosphate = RNA(n+1) + diphosphate. Its function is as follows. DNA-dependent RNA polymerase catalyzes the transcription of DNA into RNA using the four ribonucleoside triphosphates as substrates. In Psychromonas ingrahamii (strain DSM 17664 / CCUG 51855 / 37), this protein is DNA-directed RNA polymerase subunit alpha 1.